A 3132-amino-acid polypeptide reads, in one-letter code: Toxin CdiA (3132 aa).

A signal peptide (signal) is located at residues 1–32 (MHQPPVRFTYRLLSYLVSAIIAGQPLLPAVGA). The two-partner system transport domain (TPS) stretch occupies residues 36 to 322 (PQNGAGMDKA…AGGNLSVTGT (287 aa)). An FHA-1 region spans residues 351–1378 (GELTAGQNAM…ITMNTAHLLN (1028 aa)). The receptor-binding domain (RBD) stretch occupies residues 1379-1635 (SWDAISASHE…LSLSGASVSS (257 aa)). The tract at residues 1636–1820 (YPLPSGNNGY…LSPEDITLHN (185 aa)) is YP domain. The segment at 1821–1859 (GSVISGNNVQLAGGNITNSGSSINAQNDLLLDRTGSIDN) is periplasmic FHA-1 repeat (pFR). The interval 1930–2526 (RATDSLFMGA…QDSDRYDSRQ (597 aa)) is FHA-2. 2 disordered regions span residues 2195–2228 (TGTG…STIG) and 2456–2497 (AGIN…SGAQ). Polar residues-rich tracts occupy residues 2217–2228 (GTTQSQSASTIG) and 2483–2497 (VSLT…SGAQ). Positions 2862–2904 (DNLSEQERQQISMLATIASGIAGGLVGNSTSAAGTGAQAGRNS) are pre-toxin (PT) domain. The VENN CT cleavage motif motif lies at 2905–2908 (VENN). The segment at 2909–3121 (AMSGLEGFGT…IGTVTDYQIE (213 aa)) is C-terminal effector domain (CT).

In the N-terminal section; belongs to the CdiA toxin family. In terms of assembly, probably interacts with cognate immunity protein CdiI. Post-translationally, expressed as 303 kDa protein which can be processed to 284 kDa and 195 kDa forms.

The protein localises to the secreted. It localises to the target cell. It is found in the target cell cytoplasm. Its function is as follows. Toxic component of a toxin-immunity protein module, which functions as a cellular contact-dependent growth inhibition (CDI) system. CDI modules allow bacteria to communicate with and inhibit the growth of closely related neighboring bacteria (target cell counts decrease 1000- to 10(5)-fold) in a contact-dependent fashion. Inhibitory cells must be in logarithmic (not stationary) phase to inhibit growth of their targets, but protein synthesis is not necessary. The presence of P or S but not type 1 pili protects the target cells against growth inhibition for this CDI. BamA on the outer membrane of target cells acts as a receptor for CdiA, while target cell multidrug efflux pump AcrB facilitates its transport into the cytoplasm. Outer membrane receptor function is dependent on extracellular loops of BamA. Cells undergoing CDI show a 2- to 5-fold reversible decrease in aerobic respiration, proton motive force and steady-state ATP levels, suggesting this CT module is an ionophore that disrupts the target cell's inner cell membrane. Growth recovery requires an energy source. Cells expressing this protein in the absence of CdiI initially form filaments, some of which contain multiple nucleoids, while others are devoid of nucleoids. CDI cells induce the phage shock response, but pspA is not required for recovery from CDI. CDI is neutralized by its cognate immunity protein CdiI, but not by non-cognate CdiI from other bacteria with different CDI systems. Plays a role in biofilm formation, a region N-terminal to residue 644 is implicated in this receptor-independent cell adhesion. In terms of biological role, the CdiA protein is thought to be exported from the cell through the central lumen of CdiB, the other half of its two-partner system (TPS). The TPS domain probably remains associated with CdiB while the FHA-1 domain forms an extended filament (33 nm long) with the receptor-binding domain (RBD) at its extremity; in the secretion arrested state the C-terminus of the RBD and YP domains form a hairpin-like structure as the FHA-2, PT and CT domains are periplasmic. The YP domain is probably responsible for this arrest at the point where it re-enters the host cell periplasm. Upon binding to a target cell outer membrane receptor (BamA for this CDI) a signal is transmitted to activate secretion. The filament becomes about 5 nm longer, the rest of CdiA is secreted and the FHA-2 domain becomes stably associated with the target cell's outer membrane where it facilitates entry of the toxic CT domain into the target cell periplasm. From there the toxic CT domain is cleaved and gains access to the target cell cytoplasm via an inner membrane protein (multidrug efflux pump AcrB for this CDI). In Escherichia coli, this protein is Toxin CdiA.